The sequence spans 252 residues: Imidazole glycerol phosphate synthase subunit HisF (252 aa).

Residues Asp12 and Asp131 contribute to the active site.

This sequence belongs to the HisA/HisF family. Heterodimer of HisH and HisF.

It is found in the cytoplasm. The enzyme catalyses 5-[(5-phospho-1-deoxy-D-ribulos-1-ylimino)methylamino]-1-(5-phospho-beta-D-ribosyl)imidazole-4-carboxamide + L-glutamine = D-erythro-1-(imidazol-4-yl)glycerol 3-phosphate + 5-amino-1-(5-phospho-beta-D-ribosyl)imidazole-4-carboxamide + L-glutamate + H(+). The protein operates within amino-acid biosynthesis; L-histidine biosynthesis; L-histidine from 5-phospho-alpha-D-ribose 1-diphosphate: step 5/9. Its function is as follows. IGPS catalyzes the conversion of PRFAR and glutamine to IGP, AICAR and glutamate. The HisF subunit catalyzes the cyclization activity that produces IGP and AICAR from PRFAR using the ammonia provided by the HisH subunit. This is Imidazole glycerol phosphate synthase subunit HisF from Thermus thermophilus (strain ATCC BAA-163 / DSM 7039 / HB27).